Consider the following 166-residue polypeptide: NAD(P)H-quinone oxidoreductase subunit I, chloroplastic (166 aa).

4Fe-4S ferredoxin-type domains are found at residues 55 to 84 and 95 to 124; these read GRIH…VDWK and LNYS…MTEE. Positions 64, 67, 70, 74, 104, 107, 110, and 114 each coordinate [4Fe-4S] cluster.

The protein belongs to the complex I 23 kDa subunit family. NDH is composed of at least 16 different subunits, 5 of which are encoded in the nucleus. [4Fe-4S] cluster is required as a cofactor.

Its subcellular location is the plastid. The protein localises to the chloroplast thylakoid membrane. The catalysed reaction is a plastoquinone + NADH + (n+1) H(+)(in) = a plastoquinol + NAD(+) + n H(+)(out). It catalyses the reaction a plastoquinone + NADPH + (n+1) H(+)(in) = a plastoquinol + NADP(+) + n H(+)(out). Functionally, NDH shuttles electrons from NAD(P)H:plastoquinone, via FMN and iron-sulfur (Fe-S) centers, to quinones in the photosynthetic chain and possibly in a chloroplast respiratory chain. The immediate electron acceptor for the enzyme in this species is believed to be plastoquinone. Couples the redox reaction to proton translocation, and thus conserves the redox energy in a proton gradient. The sequence is that of NAD(P)H-quinone oxidoreductase subunit I, chloroplastic from Hofmeisteria fasciculata (Helogyne fasciculata).